Consider the following 346-residue polypeptide: Phosphate acyltransferase (346 aa).

Belongs to the PlsX family. Homodimer. Probably interacts with PlsY.

The protein localises to the cytoplasm. The enzyme catalyses a fatty acyl-[ACP] + phosphate = an acyl phosphate + holo-[ACP]. It participates in lipid metabolism; phospholipid metabolism. In terms of biological role, catalyzes the reversible formation of acyl-phosphate (acyl-PO(4)) from acyl-[acyl-carrier-protein] (acyl-ACP). This enzyme utilizes acyl-ACP as fatty acyl donor, but not acyl-CoA. In Pelobacter propionicus (strain DSM 2379 / NBRC 103807 / OttBd1), this protein is Phosphate acyltransferase.